Reading from the N-terminus, the 911-residue chain is Alpha-actinin-4 (911 aa).

The tract at residues 1–30 (MVDYHAASQSYQYGPSSAGNGAGGGGSMGD) is disordered. The interval 1–269 (MVDYHAASQS…YVSSFYHAFS (269 aa)) is actin-binding. Positions 12 to 26 (QYGPSSAGNGAGGGG) are interaction with VCL. The residue at position 31 (Tyr-31) is a Phosphotyrosine. Positions 40–61 (RDLLLDPAWEKQQRKTFTAWCN) are interaction with VCL. Calponin-homology (CH) domains follow at residues 50-154 (KQQR…LRFA) and 163-269 (TSAK…HAFS). Residues 84–88 (LMLLL) carry the LXXLL motif motif. An interaction with VCL region spans residues 108–126 (KINNVNKALDFIASKGVKL). An N6-acetyllysine modification is found at Lys-114. Residues 177 to 192 (TAPYKNVNVQNFHISW) are polyphosphoinositide (PIP2)-binding. Lys-214 carries the N6-acetyllysine modification. Position 249 is a phosphothreonine (Thr-249). Spectrin repeat units follow at residues 293 to 403 (HLME…WLLN), 413 to 518 (HLAE…ALEK), 528 to 639 (QLHL…ALLE), and 649 to 752 (HLRR…EVEN). 2 positions are modified to N6-acetyllysine: Lys-592 and Lys-625. A Phosphoserine modification is found at Ser-696. A mediates interaction with MICALL2 region spans residues 736-911 (WEQLLTTIAR…STALYGESDL (176 aa)). 2 consecutive EF-hand domains span residues 765–800 (EQMQ…LGYD) and 806–841 (QGEA…ETTD). Asp-778 contacts Ca(2+). The residue at position 779 (Lys-779) is an N6-acetyllysine. Ca(2+) contacts are provided by Asp-780 and Glu-789. Lys-859 carries the N6-acetyllysine modification. Position 909 is a phosphoserine (Ser-909).

This sequence belongs to the alpha-actinin family. As to quaternary structure, homodimer; antiparallel. Identified in a IGF2BP1-dependent mRNP granule complex containing untranslated mRNAs. Component of the CART complex, at least composed of ACTN4, HGS/HRS, MYO5B and TRIM3. Binds TRIM3 at the N-terminus. Interacts with MAGI1. Interacts with PDLIM2. Identified in a complex with CASK, IQGAP1, MAGI2, NPHS1, SPTAN1 and SPTBN1. Interacts with MICALL2 (preferentially in opened conformation); stimulated by RAB13 activation. Interacts with PPARG and RARA. Binds to VCL; this interaction triggers VCL conformational changes. Interacts with SEPTIN14. Interacts with IGSF8.

Its subcellular location is the nucleus. The protein resides in the cytoplasm. It is found in the cell junction. It localises to the cytoskeleton. The protein localises to the stress fiber. Its subcellular location is the perinuclear region. Functionally, F-actin cross-linking protein which is thought to anchor actin to a variety of intracellular structures. This is a bundling protein. Probably involved in vesicular trafficking via its association with the CART complex. The CART complex is necessary for efficient transferrin receptor recycling but not for EGFR degradation. Involved in tight junction assembly in epithelial cells probably through interaction with MICALL2. Links MICALL2 to the actin cytoskeleton and recruits it to the tight junctions. May also function as a transcriptional coactivator, stimulating transcription mediated by the nuclear hormone receptors PPARG and RARA. Association with IGSF8 regulates the immune synapse formation and is required for efficient T-cell activation. This chain is Alpha-actinin-4, found in Pongo abelii (Sumatran orangutan).